The following is a 486-amino-acid chain: Protein nucleotidyltransferase YdiU (486 aa).

8 residues coordinate ATP: Gly90, Gly92, Arg93, Lys113, Asp125, Gly126, Arg176, and Arg183. Asp252 functions as the Proton acceptor in the catalytic mechanism. Residues Asn253 and Asp262 each contribute to the Mg(2+) site. Position 262 (Asp262) interacts with ATP.

Belongs to the SELO family. Mg(2+) is required as a cofactor. The cofactor is Mn(2+).

The catalysed reaction is L-seryl-[protein] + ATP = 3-O-(5'-adenylyl)-L-seryl-[protein] + diphosphate. It carries out the reaction L-threonyl-[protein] + ATP = 3-O-(5'-adenylyl)-L-threonyl-[protein] + diphosphate. It catalyses the reaction L-tyrosyl-[protein] + ATP = O-(5'-adenylyl)-L-tyrosyl-[protein] + diphosphate. The enzyme catalyses L-histidyl-[protein] + UTP = N(tele)-(5'-uridylyl)-L-histidyl-[protein] + diphosphate. The catalysed reaction is L-seryl-[protein] + UTP = O-(5'-uridylyl)-L-seryl-[protein] + diphosphate. It carries out the reaction L-tyrosyl-[protein] + UTP = O-(5'-uridylyl)-L-tyrosyl-[protein] + diphosphate. Functionally, nucleotidyltransferase involved in the post-translational modification of proteins. It can catalyze the addition of adenosine monophosphate (AMP) or uridine monophosphate (UMP) to a protein, resulting in modifications known as AMPylation and UMPylation. The sequence is that of Protein nucleotidyltransferase YdiU from Pseudomonas aeruginosa (strain ATCC 15692 / DSM 22644 / CIP 104116 / JCM 14847 / LMG 12228 / 1C / PRS 101 / PAO1).